Consider the following 264-residue polypeptide: Glutamate racemase (264 aa).

Substrate-binding positions include 10–11 (DS) and 42–43 (YG). Cys73 functions as the Proton donor/acceptor in the catalytic mechanism. 74–75 (NT) lines the substrate pocket. Catalysis depends on Cys183, which acts as the Proton donor/acceptor. 184 to 185 (TH) is a binding site for substrate.

Belongs to the aspartate/glutamate racemases family.

The catalysed reaction is L-glutamate = D-glutamate. It functions in the pathway cell wall biogenesis; peptidoglycan biosynthesis. Its function is as follows. Provides the (R)-glutamate required for cell wall biosynthesis. The polypeptide is Glutamate racemase (Streptococcus mutans serotype c (strain ATCC 700610 / UA159)).